A 1102-amino-acid chain; its full sequence is Centrosomal protein of 128 kDa (1102 aa).

A phosphoserine mark is found at S31, S248, and S290. Coiled coils occupy residues 215-822 (VSDR…LETE) and 878-959 (EELK…ALQM). Residues 326 to 346 (QHQVPCISKQPLSHQDDQGDD) form a disordered region. Disordered regions lie at residues 991–1048 (SEKT…DHSR) and 1070–1102 (DPAS…KYKK). Basic and acidic residues predominate over residues 1009–1027 (QQRRDDTKPRIKSFRDDRP). Polar residues-rich tracts occupy residues 1039–1048 (HSSSCQDHSR) and 1076–1089 (GDTT…TSPQ). Residues 1090–1102 (SKKEEHEIKKYKK) show a composition bias toward basic and acidic residues.

The protein resides in the cytoplasm. The protein localises to the cytoskeleton. Its subcellular location is the microtubule organizing center. It localises to the centrosome. It is found in the centriole. The protein resides in the spindle pole. The chain is Centrosomal protein of 128 kDa (Cep128) from Mus musculus (Mouse).